Consider the following 128-residue polypeptide: Modulator protein MzrA (128 aa).

The Cytoplasmic segment spans residues 1 to 13 (MLALLRPYLSTRV). Residues 14–34 (LCVLVVCFSALMLVAFIPTLF) traverse the membrane as a helical segment. The Periplasmic segment spans residues 35–128 (RNDTALQIRA…RLSLRKQSVG (94 aa)).

It belongs to the MzrA family. As to quaternary structure, interacts with EnvZ.

It is found in the cell inner membrane. Modulates the activity of the EnvZ/OmpR two-component regulatory system, probably by directly modulating EnvZ enzymatic activity and increasing stability of phosphorylated OmpR. The chain is Modulator protein MzrA from Erwinia billingiae (strain Eb661).